We begin with the raw amino-acid sequence, 191 residues long: Calcium-activated potassium channel subunit beta-1 (191 aa).

The Cytoplasmic segment spans residues 2-18; it reads GKKLVMAQRRGETRALC. Residues 19-39 form a helical membrane-spanning segment; that stretch reads LGVAMVVGAVITYYILGTTVL. The Extracellular segment spans residues 40-157; the sequence is PLYQKSVWTQ…YRRLYGPQSL (118 aa). N-linked (GlcNAc...) asparagine glycans are attached at residues Asn-80 and Asn-142. The helical transmembrane segment at 158–178 threads the bilayer; that stretch reads LFSLFWPTFLLTGGLLIIVMV. At 179–191 the chain is on the cytoplasmic side; that stretch reads KINQSLSILAAQR.

The protein belongs to the KCNMB (TC 8.A.14.1) family. KCNMB1 subfamily. Interacts with KCNMA1 tetramer. There are probably 4 molecules of KCMNB1 per KCNMA1 tetramer. N-glycosylated.

It is found in the membrane. In terms of biological role, regulatory subunit of the calcium activated potassium KCNMA1 (maxiK) channel. Modulates the calcium sensitivity and gating kinetics of KCNMA1, thereby contributing to KCNMA1 channel diversity. Increases the apparent Ca(2+)/voltage sensitivity of the KCNMA1 channel. It also modifies KCNMA1 channel kinetics and alters its pharmacological properties. It slows down the activation and the deactivation kinetics of the channel. Acts as a negative regulator of smooth muscle contraction by enhancing the calcium sensitivity to KCNMA1. Its presence is also a requirement for internal binding of the KCNMA1 channel opener dehydrosoyasaponin I (DHS-1) triterpene glycoside and for external binding of the agonist hormone 17-beta-estradiol (E2). Increases the binding activity of charybdotoxin (CTX) toxin to KCNMA1 peptide blocker by increasing the CTX association rate and decreasing the dissociation rate. This is Calcium-activated potassium channel subunit beta-1 (KCNMB1) from Bos taurus (Bovine).